A 262-amino-acid chain; its full sequence is Troponin T, slow skeletal muscle (262 aa).

The segment covering 1 to 31 (MSDAEEQEYEEEQPEEEEAAEEEEAPEEPEP) has biased composition (acidic residues). Disordered regions lie at residues 1 to 59 (MSDA…PEGE), 107 to 153 (RAER…KKKV), and 165 to 197 (LVKA…NIDH). Phosphoserine; by CK2 is present on S2. Residues 32–41 (VAEREEERPK) show a composition bias toward basic and acidic residues. Over residues 43 to 55 (SRPVVPPLIPPKI) the composition is skewed to pro residues. Basic and acidic residues-rich tracts occupy residues 107–149 (RAER…DDAK) and 177–197 (TGRE…NIDH).

The protein belongs to the troponin T family. Interacts with TPM3.

Functionally, troponin T is the tropomyosin-binding subunit of troponin, the thin filament regulatory complex which confers calcium-sensitivity to striated muscle actomyosin ATPase activity. The polypeptide is Troponin T, slow skeletal muscle (TNNT1) (Sus scrofa (Pig)).